The sequence spans 487 residues: G-patch domain and KOW motifs-containing protein (487 aa).

Disordered stretches follow at residues 65 to 121 (HKNR…PLLM), 181 to 232 (VKPL…TGSA), and 295 to 367 (KVHQ…RPEP). Residues 88-116 (AVLSQAVKELIEESRRAQEDNSETNQTLS) are a coiled coil. Composition is skewed to basic and acidic residues over residues 96–106 (ELIEESRRAQE) and 200–209 (SALKHLEPQK). The G-patch domain maps to 154–200 (VQQYGMAMLRGMGWKEGEGIGRTFKQDVKPLEQKLRPKGLGLGADRS). Residues 226–253 (GLGTGSAVQIQSGAYKDMYGKVEGIDPD) form the KOW 1 domain. 2 stretches are compositionally biased toward basic and acidic residues: residues 295 to 333 (KVHQESKVEPHRDRTPEKEQGRKGGEKRSESSRNADVKL) and 352 to 367 (RSPEQEKEKKKIRPEP). In terms of domain architecture, KOW 2 spans 428–455 (PKEEGEHVMVVLGKYRGMVGKILHRDKQ).

This sequence belongs to the MOS2 family. As to quaternary structure, component of the minor spliceosome, which splices U12-type introns.

It localises to the nucleus. In terms of biological role, RNA-binding protein involved in pre-mRNA splicing. The sequence is that of G-patch domain and KOW motifs-containing protein (gpkow) from Xenopus laevis (African clawed frog).